A 304-amino-acid polypeptide reads, in one-letter code: Thiosulfate sulfurtransferase TUM1 (304 aa).

Rhodanese domains follow at residues 20 to 137 (KVHR…PLDS) and 177 to 299 (LAKK…PEWI). The span at 191–201 (RFEGTEPEPRS) shows a compositional bias: basic and acidic residues. Residues 191 to 222 (RFEGTEPEPRSDIPSGHIPGTQPLPYGSLLDP) are disordered. Position 201 is a phosphoserine (Ser201). Cys259 acts as the Cysteine persulfide intermediate in catalysis. Ser264 is modified (phosphoserine).

The protein resides in the mitochondrion. It localises to the cytoplasm. The enzyme catalyses thiosulfate + hydrogen cyanide = thiocyanate + sulfite + 2 H(+). Its function is as follows. Sulfur transferase that accepts persulfite from NFS1 and transfers it to UBA4 in the pathway for 2-thiolation of the wobble uridine base of tRNAs. Stimulates sulfur transfer by NFS1. Involved in metabolism of sterol esters in a tRNA thiolation pathway-independent manner. The chain is Thiosulfate sulfurtransferase TUM1 from Saccharomyces cerevisiae (strain ATCC 204508 / S288c) (Baker's yeast).